The chain runs to 276 residues: Neuroendocrine protein 7B2 (276 aa).

Cysteines 155 and 168 form a disulfide.

The protein belongs to the 7B2 family. As to quaternary structure, interacts with amon/PC2 early in the secretory pathway. Dissociation occurs at later stages.

The protein resides in the secreted. Its function is as follows. Acts as a molecular chaperone for neuroendocrine convertase amon/PC2, preventing its premature activation in the regulated secretory pathway. Binds to inactive amon in the endoplasmic reticulum and facilitates its transport from there to later compartments of the secretory pathway where it is proteolytically matured and activated. Also required for cleavage of amon. In Drosophila melanogaster (Fruit fly), this protein is Neuroendocrine protein 7B2.